The sequence spans 436 residues: L-threonine dehydratase biosynthetic IlvA (436 aa).

Positions 1–357 (MSETYVSEKS…HRGLKHYFLV (357 aa)) are catalytic. Position 70 is an N6-(pyridoxal phosphate)lysine (K70). Pyridoxal 5'-phosphate contacts are provided by residues N97, 203–207 (GGGGL), and S329. The region spanning 353–427 (HYFLVNFPQK…SAIDSRRLEP (75 aa)) is the ACT-like domain. Residues 358-436 (NFPQKPGQLR…PGTPEYEYLT (79 aa)) form a regulatory region.

It belongs to the serine/threonine dehydratase family. In terms of assembly, homotetramer. Pyridoxal 5'-phosphate serves as cofactor.

It catalyses the reaction L-threonine = 2-oxobutanoate + NH4(+). It functions in the pathway amino-acid biosynthesis; L-isoleucine biosynthesis; 2-oxobutanoate from L-threonine: step 1/1. In terms of biological role, catalyzes the anaerobic formation of alpha-ketobutyrate and ammonia from threonine in a two-step reaction. The first step involved a dehydration of threonine and a production of enamine intermediates (aminocrotonate), which tautomerizes to its imine form (iminobutyrate). Both intermediates are unstable and short-lived. The second step is the nonenzymatic hydrolysis of the enamine/imine intermediates to form 2-ketobutyrate and free ammonia. In the low water environment of the cell, the second step is accelerated by RidA. This is L-threonine dehydratase biosynthetic IlvA (ilvA) from Corynebacterium glutamicum (strain ATCC 13032 / DSM 20300 / JCM 1318 / BCRC 11384 / CCUG 27702 / LMG 3730 / NBRC 12168 / NCIMB 10025 / NRRL B-2784 / 534).